The chain runs to 304 residues: MRKVSISILFMLVSLTWGTTWLAMRIAVETIPPVFATGMRFMFAAPFLIIIAWLRKKTLLFPPGQRLFQFVICIFYFCIPFSLMIYGETYVNSGLAAIIFANMPVAVLIASVLFLNEKAKLMQIAGLTIAITALTGILLEETNTSTESHWQGITALISAVLIHAIIYTQCKKRSCTVSVITFNALPCLLAGLILSATGWFFERPQVSTFSVHSILATLYLGAFAGVFGILCYFALQQKANAFQASLVFLIFPLIAVSLEDYIYGYAISTHSMLLIIPLVIGIFLTLVARNLPVTSRCRDNSSQK.

The next 10 membrane-spanning stretches (helical) occupy residues 4-24 (VSIS…WLAM), 34-54 (VFAT…IAWL), 67-87 (LFQF…MIYG), 95-115 (LAAI…VLFL), 119-139 (AKLM…GILL), 150-170 (WQGI…YTQC), 180-200 (ITFN…TGWF), 214-234 (ILAT…CYFA), 246-266 (LVFL…YGYA), and 267-287 (ISTH…LTLV). 2 consecutive EamA domains span residues 15–139 (LTWG…GILL) and 161–287 (LIHA…LTLV).

Belongs to the EamA transporter family.

Its subcellular location is the cell membrane. The protein is Protein PagO (pagO) of Salmonella typhimurium (strain LT2 / SGSC1412 / ATCC 700720).